We begin with the raw amino-acid sequence, 128 residues long: Large ribosomal subunit protein bL12 (128 aa).

The protein belongs to the bacterial ribosomal protein bL12 family. In terms of assembly, homodimer. Part of the ribosomal stalk of the 50S ribosomal subunit. Forms a multimeric L10(L12)X complex, where L10 forms an elongated spine to which 2 to 4 L12 dimers bind in a sequential fashion. Binds GTP-bound translation factors.

Its function is as follows. Forms part of the ribosomal stalk which helps the ribosome interact with GTP-bound translation factors. Is thus essential for accurate translation. This is Large ribosomal subunit protein bL12 from Corynebacterium jeikeium (strain K411).